Here is a 438-residue protein sequence, read N- to C-terminus: Serine hydroxymethyltransferase (438 aa).

Residues Leu-133 and 137-139 (GHL) contribute to the (6S)-5,6,7,8-tetrahydrofolate site. At Lys-242 the chain carries N6-(pyridoxal phosphate)lysine.

It belongs to the SHMT family. As to quaternary structure, homodimer. The cofactor is pyridoxal 5'-phosphate.

The protein resides in the cytoplasm. It carries out the reaction (6R)-5,10-methylene-5,6,7,8-tetrahydrofolate + glycine + H2O = (6S)-5,6,7,8-tetrahydrofolate + L-serine. It functions in the pathway one-carbon metabolism; tetrahydrofolate interconversion. The protein operates within amino-acid biosynthesis; glycine biosynthesis; glycine from L-serine: step 1/1. In terms of biological role, catalyzes the reversible interconversion of serine and glycine with tetrahydrofolate (THF) serving as the one-carbon carrier. This reaction serves as the major source of one-carbon groups required for the biosynthesis of purines, thymidylate, methionine, and other important biomolecules. Also exhibits THF-independent aldolase activity toward beta-hydroxyamino acids, producing glycine and aldehydes, via a retro-aldol mechanism. This chain is Serine hydroxymethyltransferase, found in Brucella canis (strain ATCC 23365 / NCTC 10854 / RM-666).